Consider the following 361-residue polypeptide: Hydroxymethylglutaryl-CoA synthase (361 aa).

The active-site Proton donor/acceptor is the Glu92. Cys124 serves as the catalytic Acyl-thioester intermediate. (3S)-3-hydroxy-3-methylglutaryl-CoA contacts are provided by Cys124, Ser165, Thr214, and His247. His247 serves as the catalytic Proton donor/acceptor. CoA is bound at residue Lys252. 3 residues coordinate (3S)-3-hydroxy-3-methylglutaryl-CoA: Lys256, Asn279, and Ser309.

It belongs to the thiolase-like superfamily. Archaeal HMG-CoA synthase family. As to quaternary structure, interacts with acetoacetyl-CoA thiolase that catalyzes the precedent step in the pathway and with a DUF35 protein. The acetoacetyl-CoA thiolase/HMG-CoA synthase complex channels the intermediate via a fused CoA-binding site, which allows for efficient coupling of the endergonic thiolase reaction with the exergonic HMGCS reaction.

It catalyses the reaction acetoacetyl-CoA + acetyl-CoA + H2O = (3S)-3-hydroxy-3-methylglutaryl-CoA + CoA + H(+). The protein operates within metabolic intermediate biosynthesis; (R)-mevalonate biosynthesis; (R)-mevalonate from acetyl-CoA: step 2/3. In terms of biological role, catalyzes the condensation of acetyl-CoA with acetoacetyl-CoA to form 3-hydroxy-3-methylglutaryl-CoA (HMG-CoA). Functions in the mevalonate (MVA) pathway leading to isopentenyl diphosphate (IPP), a key precursor for the biosynthesis of isoprenoid compounds that are building blocks of archaeal membrane lipids. The polypeptide is Hydroxymethylglutaryl-CoA synthase (Aeropyrum pernix (strain ATCC 700893 / DSM 11879 / JCM 9820 / NBRC 100138 / K1)).